The sequence spans 240 residues: Enolase-phosphatase E1 (240 aa).

Positions 9 and 11 each coordinate Mg(2+). Substrate contacts are provided by residues 129–130 (SS) and K168. D195 serves as a coordination point for Mg(2+).

It belongs to the HAD-like hydrolase superfamily. MasA/MtnC family. Monomer. The cofactor is Mg(2+).

The protein localises to the cytoplasm. It localises to the nucleus. The enzyme catalyses 5-methylsulfanyl-2,3-dioxopentyl phosphate + H2O = 1,2-dihydroxy-5-(methylsulfanyl)pent-1-en-3-one + phosphate. Its pathway is amino-acid biosynthesis; L-methionine biosynthesis via salvage pathway; L-methionine from S-methyl-5-thio-alpha-D-ribose 1-phosphate: step 3/6. It functions in the pathway amino-acid biosynthesis; L-methionine biosynthesis via salvage pathway; L-methionine from S-methyl-5-thio-alpha-D-ribose 1-phosphate: step 4/6. Bifunctional enzyme that catalyzes the enolization of 2,3-diketo-5-methylthiopentyl-1-phosphate (DK-MTP-1-P) into the intermediate 2-hydroxy-3-keto-5-methylthiopentenyl-1-phosphate (HK-MTPenyl-1-P), which is then dephosphorylated to form the acireductone 1,2-dihydroxy-3-keto-5-methylthiopentene (DHK-MTPene). In Candida tropicalis (strain ATCC MYA-3404 / T1) (Yeast), this protein is Enolase-phosphatase E1.